The primary structure comprises 286 residues: Pyridoxal kinase PdxY (286 aa).

Substrate is bound by residues serine 9 and 44–45 (TQ). ATP-binding residues include aspartate 111, glutamate 148, and lysine 181. Aspartate 222 lines the substrate pocket.

It belongs to the pyridoxine kinase family. PdxY subfamily. In terms of assembly, homodimer. Mg(2+) serves as cofactor.

It carries out the reaction pyridoxal + ATP = pyridoxal 5'-phosphate + ADP + H(+). It functions in the pathway cofactor metabolism; pyridoxal 5'-phosphate salvage; pyridoxal 5'-phosphate from pyridoxal: step 1/1. Functionally, pyridoxal kinase involved in the salvage pathway of pyridoxal 5'-phosphate (PLP). Catalyzes the phosphorylation of pyridoxal to PLP. This is Pyridoxal kinase PdxY from Actinobacillus succinogenes (strain ATCC 55618 / DSM 22257 / CCUG 43843 / 130Z).